The primary structure comprises 37 residues: Large ribosomal subunit protein bL36 (37 aa).

This sequence belongs to the bacterial ribosomal protein bL36 family.

This chain is Large ribosomal subunit protein bL36, found in Endomicrobium trichonymphae.